We begin with the raw amino-acid sequence, 134 residues long: Fluoride-specific ion channel FluC (134 aa).

4 helical membrane passes run 7–27 (LAVA…TIMA), 38–58 (GTLL…IVLV), 69–89 (LFLF…AAES), and 110–130 (VGSL…LLGH). Residues glycine 77 and threonine 80 each contribute to the Na(+) site.

Belongs to the fluoride channel Fluc/FEX (TC 1.A.43) family.

The protein localises to the cell inner membrane. It catalyses the reaction fluoride(in) = fluoride(out). With respect to regulation, na(+) is not transported, but it plays an essential structural role and its presence is essential for fluoride channel function. Functionally, fluoride-specific ion channel. Important for reducing fluoride concentration in the cell, thus reducing its toxicity. This chain is Fluoride-specific ion channel FluC, found in Legionella pneumophila (strain Paris).